The following is an 89-amino-acid chain: Dynein light chain 2, cytoplasmic (89 aa).

It belongs to the dynein light chain family. In terms of assembly, homodimer. The cytoplasmic dynein 1 complex consists of two catalytic heavy chains (HCs) and a number of non-catalytic subunits which present intermediate chains (ICs), light intermediate chains (LICs) and light chains (LCs); the composition seems to vary in respect to the IC, LIC and LC composition. The heavy chain homodimer serves as a scaffold for the probable homodimeric assembly of the respective non-catalytic subunits. Dynein ICs and LICs bind directly to the HC dimer and the LCs assemble on the IC dimer. Interacts with DYNC1I1. Interacts with BMF. Component of the myosin V motor complex. Interacts with BCAS1. Interacts with Basson/BSN. Interacts with AMBRA1 (via TQT motifs); tethering AMBRA1 to the cytoskeleton. Interacts with IQUB.

Its subcellular location is the cytoplasm. It is found in the cytoskeleton. Acts as one of several non-catalytic accessory components of the cytoplasmic dynein 1 complex that are thought to be involved in linking dynein to cargos and to adapter proteins that regulate dynein function. Cytoplasmic dynein 1 acts as a motor for the intracellular retrograde motility of vesicles and organelles along microtubules. May play a role in changing or maintaining the spatial distribution of cytoskeletal structures. The chain is Dynein light chain 2, cytoplasmic (DYNLL2) from Homo sapiens (Human).